A 393-amino-acid polypeptide reads, in one-letter code: S-adenosylmethionine synthase (393 aa).

Glu-9 is a binding site for Mg(2+). His-15 contacts ATP. A K(+)-binding site is contributed by Glu-43. Residues Glu-56 and Gln-99 each contribute to the L-methionine site. ATP contacts are provided by residues Asp-167–Lys-169, Ser-235–Phe-238, Asp-246, Arg-252–Lys-253, Ala-269, Lys-273, and Lys-277. Asp-246 contributes to the L-methionine binding site. Lys-277 provides a ligand contact to L-methionine.

Belongs to the AdoMet synthase family. As to quaternary structure, homotetramer. Requires Mn(2+) as cofactor. Mg(2+) serves as cofactor. Co(2+) is required as a cofactor. The cofactor is K(+).

The protein resides in the cytoplasm. It catalyses the reaction L-methionine + ATP + H2O = S-adenosyl-L-methionine + phosphate + diphosphate. It functions in the pathway amino-acid biosynthesis; S-adenosyl-L-methionine biosynthesis; S-adenosyl-L-methionine from L-methionine: step 1/1. Its function is as follows. Catalyzes the formation of S-adenosylmethionine from methionine and ATP. The reaction comprises two steps that are both catalyzed by the same enzyme: formation of S-adenosylmethionine (AdoMet) and triphosphate, and subsequent hydrolysis of the triphosphate. This Litchi chinensis (Lychee) protein is S-adenosylmethionine synthase (SAMS).